A 486-amino-acid polypeptide reads, in one-letter code: D-mannonate oxidoreductase (486 aa).

25 to 36 (IVHLGCGAFHRA) provides a ligand contact to NAD(+).

The protein belongs to the mannitol dehydrogenase family. UxuB subfamily.

It catalyses the reaction D-mannonate + NAD(+) = keto-D-fructuronate + NADH + H(+). Its pathway is carbohydrate metabolism; pentose and glucuronate interconversion. This Escherichia coli (strain K12) protein is D-mannonate oxidoreductase (uxuB).